Here is a 533-residue protein sequence, read N- to C-terminus: Portal protein B (533 aa).

Belongs to the siphoviridae portal protein family. Homododecamer. Interacts with the terminase complex composed of two small and one large terminase subunits. Proteolytically cleaved by the viral protease during capsid maturation.

Its subcellular location is the virion. In terms of biological role, forms the portal vertex of the capsid. This portal plays critical roles in head assembly, genome packaging, neck/tail attachment, and genome ejection. The portal protein multimerizes as a single ring-shaped homododecamer arranged around a central channel. Binds to the terminase subunits to form the packaging machine. This chain is Portal protein B, found in Escherichia phage lambda (Bacteriophage lambda).